The chain runs to 567 residues: Serine/threonine-protein kinase SSN3 (567 aa).

The Protein kinase domain maps to 68-470 (YEIIGYIAAG…AINALDHSYF (403 aa)). 74–82 (IAAGTYGKV) is a binding site for ATP. The interval 88–179 (RQSSKSSSST…RNSENTDNRR (92 aa)) is disordered. Low complexity predominate over residues 90-101 (SSKSSSSTGSDS). 2 stretches are compositionally biased toward polar residues: residues 102-122 (LAQD…QNAG) and 133-150 (PNSN…ELST). The span at 167 to 179 (GDKRNSENTDNRR) shows a compositional bias: basic and acidic residues. Residue Lys-190 participates in ATP binding. Asp-293 acts as the Proton acceptor in catalysis. Positions 546-556 (AVSGNSSSQSS) are enriched in low complexity. Positions 546–567 (AVSGNSSSQSSRNMEPMKKKRK) are disordered.

It belongs to the protein kinase superfamily. CMGC Ser/Thr protein kinase family. CDC2/CDKX subfamily. As to quaternary structure, component of the SRB8-11 complex, a regulatory module of the Mediator complex. Requires Mg(2+) as cofactor.

The protein resides in the nucleus. It carries out the reaction L-seryl-[protein] + ATP = O-phospho-L-seryl-[protein] + ADP + H(+). It catalyses the reaction L-threonyl-[protein] + ATP = O-phospho-L-threonyl-[protein] + ADP + H(+). The catalysed reaction is [DNA-directed RNA polymerase] + ATP = phospho-[DNA-directed RNA polymerase] + ADP + H(+). Functionally, component of the SRB8-11 complex. The SRB8-11 complex is a regulatory module of the Mediator complex which is itself involved in regulation of basal and activated RNA polymerase II-dependent transcription. The SRB8-11 complex may be involved in the transcriptional repression of a subset of genes regulated by Mediator. It may inhibit the association of the Mediator complex with RNA polymerase II to form the holoenzyme complex. The SRB8-11 complex phosphorylates the C-terminal domain (CTD) of the largest subunit of RNA polymerase II. This chain is Serine/threonine-protein kinase SSN3 (SSN3), found in Candida glabrata (strain ATCC 2001 / BCRC 20586 / JCM 3761 / NBRC 0622 / NRRL Y-65 / CBS 138) (Yeast).